Reading from the N-terminus, the 428-residue chain is Cyclic AMP-responsive element-binding protein 3-like protein 3-A (428 aa).

Over 1–286 (MENYSDQGGD…VMNGSNKPVQ (286 aa)) the chain is Cytoplasmic. Positions 67 to 83 (VSGSPVWSPSPSDSGIS) are enriched in low complexity. The tract at residues 67–104 (VSGSPVWSPSPSDSGISEDPHSDHIDSPPPNASPPMEP) is disordered. Residues 93–103 (SPPPNASPPME) are compositionally biased toward pro residues. Residues 210–273 (ILKKIRRKIR…ISLMEQLRRL (64 aa)) form the bZIP domain. The tract at residues 212–241 (KKIRRKIRNKQSAQESRKKKKEYIDGLESR) is basic motif. The tract at residues 252 to 273 (LQRKVFQLEKCNISLMEQLRRL) is leucine-zipper. A helical; Signal-anchor for type II membrane protein membrane pass occupies residues 287 to 303 (AGTCVLVLLLSFTLILL). Residues 304–428 (PNLKPFTDTK…SRRSPHADDM (125 aa)) are Lumenal-facing. A disordered region spans residues 381 to 428 (TEYDPESHNHSFDQHDEHHHGDPITGHVATVTLNPRRGSRRSPHADDM). Over residues 385 to 402 (PESHNHSFDQHDEHHHGD) the composition is skewed to basic and acidic residues. N-linked (GlcNAc...) asparagine glycosylation is present at asparagine 389.

The protein belongs to the bZIP family. ATF subfamily. Binds DNA as a dimer. Post-translationally, controlled by regulated intramembrane proteolysis (RIP). A fragment containing the cytoplasmic transcription factor domain is released by proteolysis. The cleavage seems to be performed sequentially by site-1 and site-2 proteases.

Its subcellular location is the endoplasmic reticulum membrane. The protein resides in the nucleus. Transcriptional activator. Binds the cAMP response element (CRE). Activates transcription through box-B element and CRE. Seems to function synergistically with atf6. Regulates FGF21 transcription. This chain is Cyclic AMP-responsive element-binding protein 3-like protein 3-A (creb3l3a), found in Danio rerio (Zebrafish).